Consider the following 439-residue polypeptide: Glucose-6-phosphate 1-dehydrogenase (439 aa).

An NADP(+)-binding site is contributed by Lys100. His130, Lys134, Glu168, and Asp187 together coordinate substrate. His192 acts as the Proton acceptor in catalysis. Residue Lys288 coordinates substrate.

Belongs to the glucose-6-phosphate dehydrogenase family.

The catalysed reaction is D-glucose 6-phosphate + NADP(+) = 6-phospho-D-glucono-1,5-lactone + NADPH + H(+). It participates in carbohydrate degradation; pentose phosphate pathway; D-ribulose 5-phosphate from D-glucose 6-phosphate (oxidative stage): step 1/3. In terms of biological role, catalyzes the oxidation of glucose 6-phosphate to 6-phosphogluconolactone. This chain is Glucose-6-phosphate 1-dehydrogenase, found in Chlamydia trachomatis serovar D (strain ATCC VR-885 / DSM 19411 / UW-3/Cx).